Here is a 308-residue protein sequence, read N- to C-terminus: Acetyl-coenzyme A carboxylase carboxyl transferase subunit beta 1 (308 aa).

Residues 25–294 enclose the CoA carboxyltransferase N-terminal domain; sequence VWTKCTSCEQ…PMVVSVNESP (270 aa). Residues C29, C32, C48, and C51 each coordinate Zn(2+). The C4-type zinc-finger motif lies at 29 to 51; sequence CTSCEQVLYHAELERNLEVCPKC. The tract at residues 289-308 is disordered; sequence SVNESPNEEPYSVPEADEKG.

This sequence belongs to the AccD/PCCB family. In terms of assembly, acetyl-CoA carboxylase is a heterohexamer composed of biotin carboxyl carrier protein (AccB), biotin carboxylase (AccC) and two subunits each of ACCase subunit alpha (AccA) and ACCase subunit beta (AccD). It depends on Zn(2+) as a cofactor.

It is found in the cytoplasm. It catalyses the reaction N(6)-carboxybiotinyl-L-lysyl-[protein] + acetyl-CoA = N(6)-biotinyl-L-lysyl-[protein] + malonyl-CoA. It participates in lipid metabolism; malonyl-CoA biosynthesis; malonyl-CoA from acetyl-CoA: step 1/1. Functionally, component of the acetyl coenzyme A carboxylase (ACC) complex. Biotin carboxylase (BC) catalyzes the carboxylation of biotin on its carrier protein (BCCP) and then the CO(2) group is transferred by the transcarboxylase to acetyl-CoA to form malonyl-CoA. The protein is Acetyl-coenzyme A carboxylase carboxyl transferase subunit beta 1 of Vibrio campbellii (strain ATCC BAA-1116).